A 373-amino-acid chain; its full sequence is Histidinol-phosphate aminotransferase 2 (373 aa).

Residue Lys229 is modified to N6-(pyridoxal phosphate)lysine.

The protein belongs to the class-II pyridoxal-phosphate-dependent aminotransferase family. Histidinol-phosphate aminotransferase subfamily. In terms of assembly, homodimer. Pyridoxal 5'-phosphate is required as a cofactor.

It carries out the reaction L-histidinol phosphate + 2-oxoglutarate = 3-(imidazol-4-yl)-2-oxopropyl phosphate + L-glutamate. It participates in amino-acid biosynthesis; L-histidine biosynthesis; L-histidine from 5-phospho-alpha-D-ribose 1-diphosphate: step 7/9. In Hydrogenovibrio crunogenus (strain DSM 25203 / XCL-2) (Thiomicrospira crunogena), this protein is Histidinol-phosphate aminotransferase 2.